A 126-amino-acid chain; its full sequence is Histone H2B (126 aa).

Residues 1–12 (MPEPAKSAPAPK) are compositionally biased toward low complexity. Residues 1-36 (MPEPAKSAPAPKKGSKKAVTKTQKKGDKKRKKSRKE) form a disordered region. N6-acetyllysine occurs at positions 6 and 13. Positions 13–34 (KGSKKAVTKTQKKGDKKRKKSR) are enriched in basic residues. Position 15 is a phosphoserine (serine 15). Lysine 16 and lysine 21 each carry N6-acetyllysine. Lysine 121 participates in a covalent cross-link: Glycyl lysine isopeptide (Lys-Gly) (interchain with G-Cter in ubiquitin).

It belongs to the histone H2B family. In terms of assembly, the nucleosome is a histone octamer containing two molecules each of H2A, H2B, H3 and H4 assembled in one H3-H4 heterotetramer and two H2A-H2B heterodimers. The octamer wraps approximately 147 bp of DNA. Monoubiquitination of Lys-121 by the RNF20/40 complex gives a specific tag for epigenetic transcriptional activation and is also prerequisite for histone H3 'Lys-4' and 'Lys-79' methylation. In terms of processing, phosphorylated on Ser-15 during apoptosis; which facilitates apoptotic chromatin condensation.

It localises to the nucleus. Its subcellular location is the chromosome. In terms of biological role, core component of nucleosome. Nucleosomes wrap and compact DNA into chromatin, limiting DNA accessibility to the cellular machineries which require DNA as a template. Histones thereby play a central role in transcription regulation, DNA repair, DNA replication and chromosomal stability. DNA accessibility is regulated via a complex set of post-translational modifications of histones, also called histone code, and nucleosome remodeling. In Cairina moschata (Muscovy duck), this protein is Histone H2B.